Reading from the N-terminus, the 598-residue chain is Elongation factor 4 (598 aa).

The region spanning 3–185 is the tr-type G domain; sequence QHIRNFSIIA…MIVARIPPPE (183 aa). GTP-binding positions include 15 to 20 and 132 to 135; these read DHGKST and NKID.

Belongs to the TRAFAC class translation factor GTPase superfamily. Classic translation factor GTPase family. LepA subfamily.

Its subcellular location is the cell inner membrane. The enzyme catalyses GTP + H2O = GDP + phosphate + H(+). Required for accurate and efficient protein synthesis under certain stress conditions. May act as a fidelity factor of the translation reaction, by catalyzing a one-codon backward translocation of tRNAs on improperly translocated ribosomes. Back-translocation proceeds from a post-translocation (POST) complex to a pre-translocation (PRE) complex, thus giving elongation factor G a second chance to translocate the tRNAs correctly. Binds to ribosomes in a GTP-dependent manner. The chain is Elongation factor 4 from Nitrosomonas eutropha (strain DSM 101675 / C91 / Nm57).